Here is a 51-residue protein sequence, read N- to C-terminus: Small ribosomal subunit protein uS13 (51 aa).

The protein belongs to the universal ribosomal protein uS13 family. Part of the 30S ribosomal subunit. Forms a loose heterodimer with protein S19. Forms two bridges to the 50S subunit in the 70S ribosome.

In terms of biological role, located at the top of the head of the 30S subunit, it contacts several helices of the 16S rRNA. In the 70S ribosome it contacts the 23S rRNA (bridge B1a) and protein L5 of the 50S subunit (bridge B1b), connecting the 2 subunits; these bridges are implicated in subunit movement. Contacts the tRNAs in the A and P-sites. The protein is Small ribosomal subunit protein uS13 (rpsM) of Lactococcus lactis subsp. cremoris (Streptococcus cremoris).